The primary structure comprises 794 residues: DNA ligase (794 aa).

NAD(+) contacts are provided by residues 35 to 39 (DAEYD), 84 to 85 (SL), and E126. K128 (N6-AMP-lysine intermediate) is an active-site residue. 4 residues coordinate NAD(+): R149, E186, K302, and K326. C420, C423, C450, and C456 together coordinate Zn(2+). A BRCT domain is found at 711–794 (VEGLPLAGQT…KLLDEYGVAH (84 aa)).

It belongs to the NAD-dependent DNA ligase family. LigA subfamily. Mg(2+) is required as a cofactor. It depends on Mn(2+) as a cofactor.

It catalyses the reaction NAD(+) + (deoxyribonucleotide)n-3'-hydroxyl + 5'-phospho-(deoxyribonucleotide)m = (deoxyribonucleotide)n+m + AMP + beta-nicotinamide D-nucleotide.. DNA ligase that catalyzes the formation of phosphodiester linkages between 5'-phosphoryl and 3'-hydroxyl groups in double-stranded DNA using NAD as a coenzyme and as the energy source for the reaction. It is essential for DNA replication and repair of damaged DNA. The chain is DNA ligase from Pseudomonas paraeruginosa (strain DSM 24068 / PA7) (Pseudomonas aeruginosa (strain PA7)).